The primary structure comprises 238 residues: Orotidine 5'-phosphate decarboxylase (238 aa).

Residues Asp10, Lys32, 59–68 (DLKLHDIPNT), Thr122, Arg184, Gln193, Gly213, and Arg214 contribute to the substrate site. Lys61 functions as the Proton donor in the catalytic mechanism.

It belongs to the OMP decarboxylase family. Type 1 subfamily. Homodimer.

The enzyme catalyses orotidine 5'-phosphate + H(+) = UMP + CO2. It functions in the pathway pyrimidine metabolism; UMP biosynthesis via de novo pathway; UMP from orotate: step 2/2. Catalyzes the decarboxylation of orotidine 5'-monophosphate (OMP) to uridine 5'-monophosphate (UMP). The protein is Orotidine 5'-phosphate decarboxylase of Bacillus cytotoxicus (strain DSM 22905 / CIP 110041 / 391-98 / NVH 391-98).